Consider the following 371-residue polypeptide: MSHNSFGHLFRVTTFGESHGPALGCVVDGCPPLIPLEAAEIQAELDRRRPGQSRFTTQRREPDTVRILSGVFADDRTGGRQLTTGTPIALMIENVDQRSKDYSEIRDTYRPGHADYTYEAKYGIRDYRGGGRSSARETAARVAAGAIARKVLPGVTIRGALVQLGPHAIDRARFDWNEVGNNPFFCPDAVAAVQWAEILDEIRKDGSSIGAVIEVVAEGVPPGLGAPVYGKLDADLAAAMMSINAVKGVEIGDGFAAATLRGEENADEMRPGNGGAPAFLANHAGGILGGISSGQPIVCRFAVKPTSSILTPRASVTRDNRPAEVVTKGRHDPCVGIRAVPVGEAMMACVLADHYLRHRGQVGERAPFREG.

Positions 48 and 54 each coordinate NADP(+). FMN contacts are provided by residues 132–134, 244–245, G289, 304–308, and R330; these read RSS, NA, and KPTSS.

Belongs to the chorismate synthase family. As to quaternary structure, homotetramer. The cofactor is FMNH2.

The catalysed reaction is 5-O-(1-carboxyvinyl)-3-phosphoshikimate = chorismate + phosphate. It functions in the pathway metabolic intermediate biosynthesis; chorismate biosynthesis; chorismate from D-erythrose 4-phosphate and phosphoenolpyruvate: step 7/7. Functionally, catalyzes the anti-1,4-elimination of the C-3 phosphate and the C-6 proR hydrogen from 5-enolpyruvylshikimate-3-phosphate (EPSP) to yield chorismate, which is the branch point compound that serves as the starting substrate for the three terminal pathways of aromatic amino acid biosynthesis. This reaction introduces a second double bond into the aromatic ring system. The chain is Chorismate synthase from Methylobacterium nodulans (strain LMG 21967 / CNCM I-2342 / ORS 2060).